A 179-amino-acid chain; its full sequence is Large ribosomal subunit protein uL6 (179 aa).

It belongs to the universal ribosomal protein uL6 family. Part of the 50S ribosomal subunit.

This protein binds to the 23S rRNA, and is important in its secondary structure. It is located near the subunit interface in the base of the L7/L12 stalk, and near the tRNA binding site of the peptidyltransferase center. In Synechococcus sp. (strain CC9311), this protein is Large ribosomal subunit protein uL6.